The sequence spans 374 residues: tRNA-specific 2-thiouridylase MnmA (374 aa).

ATP is bound by residues 17-24 (GMSGGVDS) and M43. The segment at 103–105 (NPD) is interaction with target base in tRNA. The Nucleophile role is filled by C108. C108 and C204 are disulfide-bonded. G132 is an ATP binding site. An interaction with tRNA region spans residues 154–156 (KDQ). Catalysis depends on C204, which acts as the Cysteine persulfide intermediate. The segment at 316-317 (RY) is interaction with tRNA.

The protein belongs to the MnmA/TRMU family.

The protein resides in the cytoplasm. It carries out the reaction S-sulfanyl-L-cysteinyl-[protein] + uridine(34) in tRNA + AH2 + ATP = 2-thiouridine(34) in tRNA + L-cysteinyl-[protein] + A + AMP + diphosphate + H(+). In terms of biological role, catalyzes the 2-thiolation of uridine at the wobble position (U34) of tRNA, leading to the formation of s(2)U34. In Pseudomonas entomophila (strain L48), this protein is tRNA-specific 2-thiouridylase MnmA.